The chain runs to 383 residues: Succinyl-diaminopimelate desuccinylase (383 aa).

Histidine 73 provides a ligand contact to Zn(2+). Aspartate 75 is an active-site residue. Residue aspartate 107 coordinates Zn(2+). Glutamate 141 acts as the Proton acceptor in catalysis. 3 residues coordinate Zn(2+): glutamate 142, glutamate 170, and histidine 356.

It belongs to the peptidase M20A family. DapE subfamily. Homodimer. Requires Zn(2+) as cofactor. Co(2+) is required as a cofactor.

The catalysed reaction is N-succinyl-(2S,6S)-2,6-diaminopimelate + H2O = (2S,6S)-2,6-diaminopimelate + succinate. Its pathway is amino-acid biosynthesis; L-lysine biosynthesis via DAP pathway; LL-2,6-diaminopimelate from (S)-tetrahydrodipicolinate (succinylase route): step 3/3. Catalyzes the hydrolysis of N-succinyl-L,L-diaminopimelic acid (SDAP), forming succinate and LL-2,6-diaminopimelate (DAP), an intermediate involved in the bacterial biosynthesis of lysine and meso-diaminopimelic acid, an essential component of bacterial cell walls. The sequence is that of Succinyl-diaminopimelate desuccinylase from Pseudomonas paraeruginosa (strain DSM 24068 / PA7) (Pseudomonas aeruginosa (strain PA7)).